The chain runs to 79 residues: Large ribosomal subunit protein uL24 (79 aa).

It belongs to the universal ribosomal protein uL24 family. Part of the 50S ribosomal subunit.

One of two assembly initiator proteins, it binds directly to the 5'-end of the 23S rRNA, where it nucleates assembly of the 50S subunit. Its function is as follows. One of the proteins that surrounds the polypeptide exit tunnel on the outside of the subunit. In Lactobacillus delbrueckii subsp. bulgaricus (strain ATCC BAA-365 / Lb-18), this protein is Large ribosomal subunit protein uL24.